A 398-amino-acid chain; its full sequence is Na(+)/H(+) antiporter NhaA 2 (398 aa).

The next 11 membrane-spanning stretches (helical) occupy residues 17–37 (ILLM…LAGL), 59–79 (LLLW…GLEV), 95–115 (SLPT…YLGF), 125–145 (GWAI…ALLG), 154–174 (VFLL…IALF), 179–199 (LSIT…ILNL), 213–233 (LLLW…GVVI), 262–282 (FMIL…GMSL), 288–308 (PAAL…VLLF), 331–351 (AVAV…SLAF), and 364–384 (LGTL…LTKV).

Belongs to the NhaA Na(+)/H(+) (TC 2.A.33) antiporter family.

The protein resides in the cell inner membrane. It carries out the reaction Na(+)(in) + 2 H(+)(out) = Na(+)(out) + 2 H(+)(in). Na(+)/H(+) antiporter that extrudes sodium in exchange for external protons. The polypeptide is Na(+)/H(+) antiporter NhaA 2 (Shewanella denitrificans (strain OS217 / ATCC BAA-1090 / DSM 15013)).